The following is a 176-amino-acid chain: Natural cytotoxicity triggering receptor 3 (176 aa).

The signal sequence occupies residues 1–18 (MAWMLLLILIMVYPGSCA). The region spanning 19 to 126 (LWVSQPPEIR…VGTGNGTRLV (108 aa)) is the Ig-like domain. The Extracellular portion of the chain corresponds to 19 to 135 (LWVSQPPEIR…VVEKEYPQLG (117 aa)). An intrachain disulfide couples C39 to C108. Residues N42 and N121 are each glycosylated (N-linked (GlcNAc...) asparagine). The helical transmembrane segment at 136–156 (AGTVLLLRAGFYAVSFLSVAV) threads the bilayer. Over 157-176 (GSTLYYQGKCHCHMGTHCHS) the chain is Cytoplasmic.

The protein belongs to the natural cytotoxicity receptor (NCR) family. As to quaternary structure, homodimer in the unliganted form. Interacts with CD3Z. Interacts with and is activated by binding to NCR3LG1. Interacts with and is activated by binding to BAG6. Interacts with and is inhibited by binding to LGALS3.

It localises to the cell membrane. Cell membrane receptor of natural killer/NK cells that is activated by binding of extracellular ligands including BAG6 and NCR3LG1. Stimulates NK cells cytotoxicity toward neighboring cells producing these ligands. It controls, for instance, NK cells cytotoxicity against tumor cells. Engagement of NCR3 by BAG6 also promotes myeloid dendritic cells (DC) maturation, both through killing DCs that did not acquire a mature phenotype, and inducing the release by NK cells of TNFA and IFNG that promote DC maturation. The protein is Natural cytotoxicity triggering receptor 3 (NCR3) of Macaca fascicularis (Crab-eating macaque).